The sequence spans 293 residues: Thiamine-monophosphate kinase (293 aa).

5 residues coordinate Mg(2+): Glu25, Val39, Asp40, Asp68, and Asp113. ATP is bound by residues 112 to 113 (GD) and Arg136. Asp194 is a Mg(2+) binding site. Ser196 provides a ligand contact to ATP. Asp197 serves as a coordination point for Mg(2+). Residues Glu243 and Trp286 each contribute to the substrate site.

Belongs to the thiamine-monophosphate kinase family. Homodimer.

It carries out the reaction thiamine phosphate + ATP = thiamine diphosphate + ADP. The protein operates within cofactor biosynthesis; thiamine diphosphate biosynthesis; thiamine diphosphate from thiamine phosphate: step 1/1. With respect to regulation, is inhibited by AMP; the mode of AMP inhibition is uncompetitive for both TMP and ATP. In terms of biological role, catalyzes the ATP-dependent phosphorylation of thiamine-monophosphate (TMP) to form thiamine-pyrophosphate (TPP), the active form of vitamin B1. The chain is Thiamine-monophosphate kinase from Pyrobaculum calidifontis (strain DSM 21063 / JCM 11548 / VA1).